Consider the following 308-residue polypeptide: Bifunctional protein FolD (308 aa).

NADP(+) is bound at residue 170–172 (GKG).

The protein belongs to the tetrahydrofolate dehydrogenase/cyclohydrolase family. In terms of assembly, homodimer.

The catalysed reaction is (6R)-5,10-methylene-5,6,7,8-tetrahydrofolate + NADP(+) = (6R)-5,10-methenyltetrahydrofolate + NADPH. The enzyme catalyses (6R)-5,10-methenyltetrahydrofolate + H2O = (6R)-10-formyltetrahydrofolate + H(+). The protein operates within one-carbon metabolism; tetrahydrofolate interconversion. Catalyzes the oxidation of 5,10-methylenetetrahydrofolate to 5,10-methenyltetrahydrofolate and then the hydrolysis of 5,10-methenyltetrahydrofolate to 10-formyltetrahydrofolate. In Pyrobaculum calidifontis (strain DSM 21063 / JCM 11548 / VA1), this protein is Bifunctional protein FolD.